The following is a 254-amino-acid chain: Urease accessory protein UreD (254 aa).

The protein belongs to the UreD family. In terms of assembly, ureD, UreF and UreG form a complex that acts as a GTP-hydrolysis-dependent molecular chaperone, activating the urease apoprotein by helping to assemble the nickel containing metallocenter of UreC. The UreE protein probably delivers the nickel.

It localises to the cytoplasm. Its function is as follows. Required for maturation of urease via the functional incorporation of the urease nickel metallocenter. The polypeptide is Urease accessory protein UreD (Streptomyces coelicolor (strain ATCC BAA-471 / A3(2) / M145)).